The following is a 250-amino-acid chain: Transcriptional activator protein ExpR (250 aa).

In terms of domain architecture, HTH luxR-type spans 173–238 (KSQEADLFSQ…HAIRLGVEMN (66 aa)). Residues 197–216 (YQEIALILGITTSTVKFHIG) constitute a DNA-binding region (H-T-H motif).

The protein belongs to the autoinducer-regulated transcriptional regulatory protein family.

Its function is as follows. Functions as an OHLL responsive transcriptional regulator that acts in virulence (soft rot disease) through the activation of genes for plant tissue macerating enzymes. The sequence is that of Transcriptional activator protein ExpR (expR) from Dickeya dadantii (strain 3937) (Erwinia chrysanthemi (strain 3937)).